The following is a 341-amino-acid chain: Ketol-acid reductoisomerase (NADP(+)) (341 aa).

Residues 1–181 (MARVYREGDI…GCARAGVLET (181 aa)) enclose the KARI N-terminal Rossmann domain. NADP(+) contacts are provided by residues 24-27 (FGSQ), serine 50, serine 52, and 82-85 (DERQ). Residue histidine 107 is part of the active site. Glycine 133 is an NADP(+) binding site. The KARI C-terminal knotted domain occupies 182-327 (TFAEETETDL…AELRALAAEG (146 aa)). The Mg(2+) site is built by aspartate 190, glutamate 194, glutamate 226, and glutamate 230. Residue serine 251 coordinates substrate.

The protein belongs to the ketol-acid reductoisomerase family. The cofactor is Mg(2+).

The catalysed reaction is (2R)-2,3-dihydroxy-3-methylbutanoate + NADP(+) = (2S)-2-acetolactate + NADPH + H(+). The enzyme catalyses (2R,3R)-2,3-dihydroxy-3-methylpentanoate + NADP(+) = (S)-2-ethyl-2-hydroxy-3-oxobutanoate + NADPH + H(+). Its pathway is amino-acid biosynthesis; L-isoleucine biosynthesis; L-isoleucine from 2-oxobutanoate: step 2/4. The protein operates within amino-acid biosynthesis; L-valine biosynthesis; L-valine from pyruvate: step 2/4. Functionally, involved in the biosynthesis of branched-chain amino acids (BCAA). Catalyzes an alkyl-migration followed by a ketol-acid reduction of (S)-2-acetolactate (S2AL) to yield (R)-2,3-dihydroxy-isovalerate. In the isomerase reaction, S2AL is rearranged via a Mg-dependent methyl migration to produce 3-hydroxy-3-methyl-2-ketobutyrate (HMKB). In the reductase reaction, this 2-ketoacid undergoes a metal-dependent reduction by NADPH to yield (R)-2,3-dihydroxy-isovalerate. The chain is Ketol-acid reductoisomerase (NADP(+)) from Rubrobacter xylanophilus (strain DSM 9941 / JCM 11954 / NBRC 16129 / PRD-1).